A 617-amino-acid chain; its full sequence is MLAGCSFSSSRHQMSTAQRFDILPCGFSKRGSRGDGAAPRVAGDARSGATTCSFRTHPAPPVTQSVSWGAKPEPGGNGNGAHRAVKRAHDEDAVEEYGPIVRAKRTRMGGDGDEVWFHQSIAGTMQATAAGEGEEAEEEKVFLVPSAAAFPHGMAAAGPSLAAAKKEEYSKSPSDSSSSSGTDGGSSAMMPPPQPPEFDARNGVPAPGQAEREALELVRALTACADSLSAGNHEAANYYLARLGEMASPAGPTPMHRVAAYFTEALALRVVRMWPHMFDIGPPRELTDDAFGGGDDDAMALRILNAITPIPRFLHFTLNERLLREFEGHERVHVIDFDIKQGLQWPGLLQSLAARAVPPAHVRITGVGESRQELQETGARLARVAAALGLAFEFHAVVDRLEDVRLWMLHVKRGECVAVNCVLAMHRLLRDDAALTDFLGLARSTGATILLLGEHEGGGLNSGRWEARFARALRYYAAAFDAVDAAGLPEASPARAKAEEMFAREIRNAVAFEGPERFERHESFAGWRRRMEDGGGFKNAGIGEREAMQGRMIARMFGPDKYTVQAHGGGGSGGGEALTLRWLDQPLYTVTAWTPAGDGAGGSTVSASTTASHSQQS.

2 disordered regions span residues 29-92 (KRGS…HDED) and 159-206 (PSLA…GVPA). Low complexity predominate over residues 171–187 (KSPSDSSSSSGTDGGSS). In terms of domain architecture, GRAS spans 208 to 594 (GQAEREALEL…QPLYTVTAWT (387 aa)). Residues 215 to 295 (LELVRALTAC…LTDDAFGGGD (81 aa)) are leucine repeat I (LRI). The interval 301–366 (LRILNAITPI…VPPAHVRITG (66 aa)) is VHIID. Positions 332–336 (VHVID) match the VHIID motif. The interval 376–408 (ETGARLARVAAALGLAFEFHAVVDRLEDVRLWM) is leucine repeat II (LRII). A PFYRE region spans residues 417–508 (VAVNCVLAMH…EEMFAREIRN (92 aa)). The segment at 511–594 (AFEGPERFER…QPLYTVTAWT (84 aa)) is SAW. Residues 596–617 (AGDGAGGSTVSASTTASHSQQS) form a disordered region. The segment covering 603-617 (STVSASTTASHSQQS) has biased composition (low complexity).

The protein belongs to the GRAS family. As to quaternary structure, interacts with GSK2. Interacts with SMOS1 (via C-terminus). Phosphorylated on serine and threonine residues by GSK2. Dephosphorylated during response to brassinosteroid. Expressed in the shoot apical meristem (SAM) and elongating cells of young seedlings. Expressed in leaf joints, culms, internodes, stems, young panicles, primary roots and lateral roots.

The protein localises to the nucleus. Functionally, probable transcription factor that acts as a positive regulator of brassinosteroid (BR) signaling. Functions downstream of BRI1 and GSK2 to modulate BR responses. Acts as a direct target of GSK2 kinase to mediate BR responses. Involved in feedback inhibition of BR biosynthetic genes. Repressed by BZR1. Cooperatively functions in a transactivating complex with SMOS1 to enhance the transcription of the SMOS1 target PHI-1, and regulate plant organ size. Interaction between SMOS1 and DLT is a crosstalk point for auxin and brassinosteroid signaling. This is Protein DWARF AND LOW-TILLERING from Oryza sativa subsp. japonica (Rice).